The chain runs to 420 residues: Gamma-glutamyl phosphate reductase (420 aa).

The protein belongs to the gamma-glutamyl phosphate reductase family.

It localises to the cytoplasm. The catalysed reaction is L-glutamate 5-semialdehyde + phosphate + NADP(+) = L-glutamyl 5-phosphate + NADPH + H(+). Its pathway is amino-acid biosynthesis; L-proline biosynthesis; L-glutamate 5-semialdehyde from L-glutamate: step 2/2. Functionally, catalyzes the NADPH-dependent reduction of L-glutamate 5-phosphate into L-glutamate 5-semialdehyde and phosphate. The product spontaneously undergoes cyclization to form 1-pyrroline-5-carboxylate. The polypeptide is Gamma-glutamyl phosphate reductase (Streptococcus pneumoniae serotype 19F (strain G54)).